A 366-amino-acid chain; its full sequence is Beta sliding clamp (366 aa).

It belongs to the beta sliding clamp family. Forms a ring-shaped head-to-tail homodimer around DNA which binds and tethers DNA polymerases and other proteins to the DNA. The DNA replisome complex has a single clamp-loading complex (3 tau and 1 each of delta, delta', psi and chi subunits) which binds 3 Pol III cores (1 core on the leading strand and 2 on the lagging strand) each with a beta sliding clamp dimer. Additional proteins in the replisome are other copies of gamma, psi and chi, Ssb, DNA helicase and RNA primase.

The protein resides in the cytoplasm. Confers DNA tethering and processivity to DNA polymerases and other proteins. Acts as a clamp, forming a ring around DNA (a reaction catalyzed by the clamp-loading complex) which diffuses in an ATP-independent manner freely and bidirectionally along dsDNA. Initially characterized for its ability to contact the catalytic subunit of DNA polymerase III (Pol III), a complex, multichain enzyme responsible for most of the replicative synthesis in bacteria; Pol III exhibits 3'-5' exonuclease proofreading activity. The beta chain is required for initiation of replication as well as for processivity of DNA replication. This chain is Beta sliding clamp (dnaN), found in Haemophilus influenzae (strain ATCC 51907 / DSM 11121 / KW20 / Rd).